A 401-amino-acid polypeptide reads, in one-letter code: Elongation factor Tu (401 aa).

One can recognise a tr-type G domain in the interval 10 to 211 (KPHLNVGTIG…ALDTFVPNPK (202 aa)). The tract at residues 19 to 26 (GHVDHGKT) is G1. 19-26 (GHVDHGKT) provides a ligand contact to GTP. A Mg(2+)-binding site is contributed by T26. The tract at residues 62 to 66 (GITIA) is G2. Residues 83–86 (DCPG) form a G3 region. GTP-binding positions include 83–87 (DCPGH) and 138–141 (NKAD). The segment at 138 to 141 (NKAD) is G4. The interval 179-181 (SAV) is G5.

The protein belongs to the TRAFAC class translation factor GTPase superfamily. Classic translation factor GTPase family. EF-Tu/EF-1A subfamily. Monomer.

It localises to the cytoplasm. The enzyme catalyses GTP + H2O = GDP + phosphate + H(+). Functionally, GTP hydrolase that promotes the GTP-dependent binding of aminoacyl-tRNA to the A-site of ribosomes during protein biosynthesis. The polypeptide is Elongation factor Tu (Leptospira interrogans serogroup Icterohaemorrhagiae serovar copenhageni (strain Fiocruz L1-130)).